Here is a 251-residue protein sequence, read N- to C-terminus: tRNA (guanine-N(1)-)-methyltransferase (251 aa).

Residues Gly113 and Ile133–Leu138 contribute to the S-adenosyl-L-methionine site.

This sequence belongs to the RNA methyltransferase TrmD family. In terms of assembly, homodimer.

It is found in the cytoplasm. The enzyme catalyses guanosine(37) in tRNA + S-adenosyl-L-methionine = N(1)-methylguanosine(37) in tRNA + S-adenosyl-L-homocysteine + H(+). In terms of biological role, specifically methylates guanosine-37 in various tRNAs. This chain is tRNA (guanine-N(1)-)-methyltransferase, found in Methylococcus capsulatus (strain ATCC 33009 / NCIMB 11132 / Bath).